Reading from the N-terminus, the 475-residue chain is Mitochondrial adenyl nucleotide antiporter SLC25A24 (475 aa).

The interval 1-173 (MLRWLRGFVL…RFWKHSTGID (173 aa)) is regulatory N-terminal domain. Topologically, residues 1–197 (MLRWLRGFVL…ERKSGQWWRQ (197 aa)) are mitochondrial intermembrane. EF-hand domains are found at residues 19–54 (EPPTRYETLFQALDRNGDGVVDIRELQEGLKSLGIP), 55–88 (LGQDAEEKIFTTGDVNKDGKLDFEEFMKYLKDHE), 86–121 (DHEKKMKLAFKSLDKNNDGKIEASEIVQSLQTLGLT), and 122–157 (ISEQQAELILQSIDADGTMTVDWNEWRDYFLFNPVA). The Ca(2+) site is built by D32, N34, D36, V38, E43, D68, N70, D72, K74, E79, D99, N101, D103, K105, E110, D135, D137, T139, T141, and E146. A linker region region spans residues 159–168 (IEEIIRFWKH). Residues 174-475 (IGDSLTIPDE…MKQTLGVTQK (302 aa)) form a C-terminal transmembrane transporter domain region. Solcar repeat units follow at residues 192 to 276 (GQWW…YKKL), 284 to 369 (IGTF…LKSH), and 381 to 469 (PGVL…MKQT). Residues 198-215 (LLAGGIAGAVSRTSTAPL) traverse the membrane as a helical segment. The Mitochondrial matrix segment spans residues 216 to 250 (DRLKVMMQVHGSKSMNIFGGFRQMIKEGGVRSLWR). Residues 251–270 (GNGTNVIKIAPETAVKFWVY) traverse the membrane as a helical segment. Over 271-293 (EQYKKLLTEEGQKIGTFERFISG) the chain is Mitochondrial intermembrane. A helical transmembrane segment spans residues 294–307 (SMAGATAQTFIYPM). Residues 308–343 (EVMKTRLAVGKTGQYSGIYDCAKKILKYEGFGAFYK) are Mitochondrial matrix-facing. The residue at position 318 (K318) is an N6-acetyllysine; alternate. The residue at position 318 (K318) is an N6-succinyllysine; alternate. The residue at position 334 (K334) is an N6-acetyllysine. A helical membrane pass occupies residues 344 to 363 (GYVPNLLGIIPYAGIDLAVY). The Mitochondrial intermembrane segment spans residues 364–386 (ELLKSHWLDNFAKDSVNPGVLVL). A helical transmembrane segment spans residues 387 to 404 (LGCGALSSTCGQLASYPL). Over 405–443 (ALVRTRMQAQAMLEGAPQLNMVGLFRRIISKEGLPGLYR) the chain is Mitochondrial matrix. K435 bears the N6-acetyllysine; alternate mark. K435 is subject to N6-succinyllysine; alternate. Residues 444–463 (GITPNFMKVLPAVGISYVVY) form a helical membrane-spanning segment. Residues 464 to 475 (ENMKQTLGVTQK) are Mitochondrial intermembrane-facing.

The protein belongs to the mitochondrial carrier (TC 2.A.29) family. In terms of assembly, monomer. In terms of tissue distribution, mainly expressed in colon. Also expressed in the small intestine proximal to the ileum. Weakly expressed in kidney but not in the liver.

Its subcellular location is the mitochondrion inner membrane. It localises to the peroxisome membrane. It catalyses the reaction Mg(2+)(out) + phosphate(in) + ATP(out) = Mg(2+)(in) + phosphate(out) + ATP(in). The enzyme catalyses ADP(out) + phosphate(in) + H(+)(out) = ADP(in) + phosphate(out) + H(+)(in). It carries out the reaction AMP(out) + phosphate(in) = AMP(in) + phosphate(out). The catalysed reaction is phosphate(in) + ATP(out) + 2 H(+)(out) = phosphate(out) + ATP(in) + 2 H(+)(in). It catalyses the reaction dADP(in) + ADP(out) = dADP(out) + ADP(in). The enzyme catalyses Mg(2+)(in) + ADP(out) + ATP(in) + H(+)(out) = Mg(2+)(out) + ADP(in) + ATP(out) + H(+)(in). It carries out the reaction ADP(out) + diphosphate(in) = ADP(in) + diphosphate(out). The catalysed reaction is dAMP(in) + ADP(out) + H(+)(out) = dAMP(out) + ADP(in) + H(+)(in). It catalyses the reaction 3'-AMP(in) + ADP(out) + H(+)(out) = 3'-AMP(out) + ADP(in) + H(+)(in). The enzyme catalyses dAMP(out) + phosphate(in) = dAMP(in) + phosphate(out). It carries out the reaction 3'-AMP(out) + phosphate(in) = 3'-AMP(in) + phosphate(out). The catalysed reaction is dADP(out) + phosphate(in) + H(+)(out) = dADP(in) + phosphate(out) + H(+)(in). Its activity is regulated as follows. Activated by an increase in cytosolic calcium levels that induce a conformational change of the N-terminal regulatory domain, uncapping the channel and allowing transport. Inhibited by bathophenanthroline, mersalyl, p-hydroxymercuribenzoate, bromcresol purple and tannic acid. In terms of biological role, electroneutral antiporter that mediates the transport of adenyl nucleotides through the inner mitochondrial membrane. Originally identified as an ATP-magnesium/inorganic phosphate antiporter, it also acts as a broad specificity adenyl nucleotide antiporter. By regulating the mitochondrial matrix adenyl nucleotide pool could adapt to changing cellular energetic demands and indirectly regulate adenyl nucleotide-dependent metabolic pathways. In vitro, a low activity is also observed with guanyl and pyrimidine nucleotides. May play a role in protecting cells against oxidative stress-induced cell death, by buffering calcium levels in the mitochondrial matrix through the formation of calcium-phosphate precipitates. This Oryctolagus cuniculus (Rabbit) protein is Mitochondrial adenyl nucleotide antiporter SLC25A24 (SLC25A24).